The following is a 255-amino-acid chain: Segregation and condensation protein A (255 aa).

The protein belongs to the ScpA family. Component of a cohesin-like complex composed of ScpA, ScpB and the Smc homodimer, in which ScpA and ScpB bind to the head domain of Smc. The presence of the three proteins is required for the association of the complex with DNA.

Its subcellular location is the cytoplasm. Its function is as follows. Participates in chromosomal partition during cell division. May act via the formation of a condensin-like complex containing Smc and ScpB that pull DNA away from mid-cell into both cell halves. This is Segregation and condensation protein A from Lactiplantibacillus plantarum (strain ATCC BAA-793 / NCIMB 8826 / WCFS1) (Lactobacillus plantarum).